A 387-amino-acid polypeptide reads, in one-letter code: Succinate--CoA ligase [ADP-forming] subunit beta (387 aa).

The region spanning 9–245 (KDLLESYGLK…KSQENAKELK (237 aa)) is the ATP-grasp domain. ATP-binding positions include Lys46, 53-55 (GRG), Glu100, Tyr103, and Glu108. Mg(2+) contacts are provided by Asn200 and Asp214. Substrate-binding positions include Asn265 and 322–324 (GIV).

Belongs to the succinate/malate CoA ligase beta subunit family. As to quaternary structure, heterotetramer of two alpha and two beta subunits. Mg(2+) serves as cofactor.

The catalysed reaction is succinate + ATP + CoA = succinyl-CoA + ADP + phosphate. The enzyme catalyses GTP + succinate + CoA = succinyl-CoA + GDP + phosphate. Its pathway is carbohydrate metabolism; tricarboxylic acid cycle; succinate from succinyl-CoA (ligase route): step 1/1. Its function is as follows. Succinyl-CoA synthetase functions in the citric acid cycle (TCA), coupling the hydrolysis of succinyl-CoA to the synthesis of either ATP or GTP and thus represents the only step of substrate-level phosphorylation in the TCA. The beta subunit provides nucleotide specificity of the enzyme and binds the substrate succinate, while the binding sites for coenzyme A and phosphate are found in the alpha subunit. The sequence is that of Succinate--CoA ligase [ADP-forming] subunit beta from Francisella tularensis subsp. holarctica (strain OSU18).